A 128-amino-acid chain; its full sequence is MDAVAVYHGKISRETGEKLLLATGLDGSYLLRDSESVPGVYCLCVLYHGYIYTYRVSQTETGSWSAETAPGVHKRYFRKIKNLISAFQKPDQGIVIPLQYPVEKKSSARSTQGTTGIREDPDVCLKAP.

An SH2 domain is found at 6-102; that stretch reads VYHGKISRET…GIVIPLQYPV (97 aa). The interaction with FYN SH3 domain stretch occupies residues 67–92; the sequence is ETAPGVHKRYFRKIKNLISAFQKPDQ. K89 carries the post-translational modification N6-acetyllysine. Residues 106–128 form a disordered region; that stretch reads SSARSTQGTTGIREDPDVCLKAP. Residues 117-128 are compositionally biased toward basic and acidic residues; it reads IREDPDVCLKAP.

Interacts with CD84, CD244, LY9, SLAMF1 and FYN. Interacts with NTRK1, NTRK2 and NTRK3.

It is found in the cytoplasm. Functionally, cytoplasmic adapter regulating receptors of the signaling lymphocytic activation molecule (SLAM) family such as SLAMF1, CD244, LY9, CD84, SLAMF6 and SLAMF7. In SLAM signaling seems to cooperate with SH2D1B/EAT-2. Initially it has been proposed that association with SLAMF1 prevents SLAMF1 binding to inhibitory effectors including INPP5D/SHIP1 and PTPN11/SHP-2. However, by simultaneous interactions, recruits FYN which subsequently phosphorylates and activates SLAMF1. Positively regulates CD244/2B4- and CD84-mediated natural killer (NK) cell functions. Can also promote CD48-, SLAMF6 -, LY9-, and SLAMF7-mediated NK cell activation. In the context of NK cell-mediated cytotoxicity enhances conjugate formation with target cells. May also regulate the activity of the neurotrophin receptors NTRK1, NTRK2 and NTRK3. This Macaca mulatta (Rhesus macaque) protein is SH2 domain-containing protein 1A (SH2D1A).